A 644-amino-acid chain; its full sequence is Protein lin-9 (644 aa).

A disordered region spans residues 1 to 77; sequence MSSAVRSPRK…GRDSPSVNSL (77 aa). The segment covering 50–62 has biased composition (basic residues); that stretch reads SIKRTGSPKKSPA.

The protein belongs to the lin-9 family. Component of the DRM complex, at least composed of lin-9, lin-35, lin-37, lin-52, lin-53, lin-54- dpl-1 and efl-1. Interacts with zft-11; the interaction is required to suppress the activation of non-neuronal genes in neurons.

It localises to the nucleus. Synthetic multivulva class B (synMuvB) protein. SynMuvB proteins are required to repress the induction of vulval development by Ras signaling and probably act by forming the multiprotein DRM complex that represses transcription. Required for the development of sheath cells in the hermaphrodite gonad and for the development of the male spicule, rays and gonad. In association with the zinc finger protein ztf-11, negatively regulates the expression of non-neuronal genes during neurogenesis. This chain is Protein lin-9, found in Caenorhabditis elegans.